The primary structure comprises 1149 residues: DNA polymerase (1149 aa).

Over residues 1 to 28 the composition is skewed to polar residues; that stretch reads MSLVQSHGTSGLFTEPPNSINQQESSGP. The disordered stretch occupies residues 1-49; that stretch reads MSLVQSHGTSGLFTEPPNSINQQESSGPSLPAQDATQASASSARAGATP. Residues 31–49 show a composition bias toward low complexity; that stretch reads PAQDATQASASSARAGATP.

It belongs to the DNA polymerase type-B family. In terms of assembly, heterodimer with the terminal protein; this heterodimer binds to bp 9 to 18 of the genome. Forms a complex with viral pTP, DBP and hosts NFIA and POU2F1/OCT1 for initiation of replication.

The protein localises to the host nucleus. It catalyses the reaction DNA(n) + a 2'-deoxyribonucleoside 5'-triphosphate = DNA(n+1) + diphosphate. Eukaryotic-type DNA polymerase involved in viral genomic replication. DNA synthesis is protein primed, and acts in a strand displacement replication. Assembles in complex with viral pTP, DBP, host NFIA and host POU2F1/OCT1 on viral origin of replication. The polymerase covalently transfers dCMP onto pTP, thereby initiating complementary strand synthesis. The polypeptide is DNA polymerase (Canine adenovirus serotype 1 (strain CLL) (CAdV-1)).